Consider the following 239-residue polypeptide: Protein TIPIN homolog (239 aa).

2 stretches are compositionally biased toward acidic residues: residues 1–14 (MDEM…DELD) and 156–166 (DGADDDEDDLF). Disordered stretches follow at residues 1-38 (MDEM…RRII) and 135-239 (ESTD…NNDW). Basic and acidic residues-rich tracts occupy residues 169 to 193 (LPEK…EKKN) and 206 to 223 (YRMM…AREA). Residues 224–239 (EAEDELMEDFDLNNDW) show a composition bias toward acidic residues.

Belongs to the CSM3 family.

It is found in the cytoplasm. Its subcellular location is the nucleus. Functionally, required for normal progression of S-phase. Important for cell survival after DNA damage or replication stress. The protein is Protein TIPIN homolog of Caenorhabditis briggsae.